The sequence spans 292 residues: Pantothenate synthetase (292 aa).

Residue 30–37 (MGALHEGH) participates in ATP binding. Catalysis depends on H37, which acts as the Proton donor. A (R)-pantoate-binding site is contributed by Q61. Q61 is a beta-alanine binding site. Residue 147–150 (GEKD) participates in ATP binding. Q153 lines the (R)-pantoate pocket. 184–187 (VSSR) lines the ATP pocket.

This sequence belongs to the pantothenate synthetase family. Homodimer.

Its subcellular location is the cytoplasm. The enzyme catalyses (R)-pantoate + beta-alanine + ATP = (R)-pantothenate + AMP + diphosphate + H(+). Its pathway is cofactor biosynthesis; (R)-pantothenate biosynthesis; (R)-pantothenate from (R)-pantoate and beta-alanine: step 1/1. Functionally, catalyzes the condensation of pantoate with beta-alanine in an ATP-dependent reaction via a pantoyl-adenylate intermediate. This is Pantothenate synthetase from Chlorobium phaeovibrioides (strain DSM 265 / 1930) (Prosthecochloris vibrioformis (strain DSM 265)).